A 340-amino-acid chain; its full sequence is Small ribosomal subunit biogenesis GTPase RsgA (340 aa).

Over residues 20–34 (ERAERAERRARRDDT) the composition is skewed to basic and acidic residues. The interval 20–42 (ERAERAERRARRDDTSLDAGDYG) is disordered. The CP-type G domain maps to 116-274 (RGQLKPVAAN…LIDSPGIREF (159 aa)). GTP-binding positions include 163–166 (NKTD) and 216–224 (GQSGVGKSS). The Zn(2+) site is built by Cys298, Cys303, His305, and Cys311.

This sequence belongs to the TRAFAC class YlqF/YawG GTPase family. RsgA subfamily. Monomer. Associates with 30S ribosomal subunit, binds 16S rRNA. It depends on Zn(2+) as a cofactor.

It is found in the cytoplasm. Its function is as follows. One of several proteins that assist in the late maturation steps of the functional core of the 30S ribosomal subunit. Helps release RbfA from mature subunits. May play a role in the assembly of ribosomal proteins into the subunit. Circularly permuted GTPase that catalyzes slow GTP hydrolysis, GTPase activity is stimulated by the 30S ribosomal subunit. The polypeptide is Small ribosomal subunit biogenesis GTPase RsgA (Chromohalobacter salexigens (strain ATCC BAA-138 / DSM 3043 / CIP 106854 / NCIMB 13768 / 1H11)).